Reading from the N-terminus, the 686-residue chain is Methionine--tRNA ligase (686 aa).

A 'HIGH' region motif is present at residues 15-25 (PYANGSIHLGH). The Zn(2+) site is built by cysteine 146, cysteine 149, cysteine 159, and cysteine 162. The 'KMSKS' region motif lies at 332–336 (KMSKS). Lysine 335 is an ATP binding site. Positions 585 to 686 (AFAAVDMRIA…EGAQPGMRVM (102 aa)) constitute a tRNA-binding domain.

It belongs to the class-I aminoacyl-tRNA synthetase family. MetG type 1 subfamily. As to quaternary structure, homodimer. It depends on Zn(2+) as a cofactor.

Its subcellular location is the cytoplasm. It catalyses the reaction tRNA(Met) + L-methionine + ATP = L-methionyl-tRNA(Met) + AMP + diphosphate. In terms of biological role, is required not only for elongation of protein synthesis but also for the initiation of all mRNA translation through initiator tRNA(fMet) aminoacylation. The chain is Methionine--tRNA ligase from Vibrio campbellii (strain ATCC BAA-1116).